The sequence spans 197 residues: dITP/XTP pyrophosphatase (197 aa).

10–15 serves as a coordination point for substrate; the sequence is SHNGGK. Mg(2+) contacts are provided by glutamate 41 and aspartate 70. The Proton acceptor role is filled by aspartate 70. Substrate contacts are provided by residues serine 71, 154–157, lysine 177, and 182–183; these read FGYD and HR.

The protein belongs to the HAM1 NTPase family. In terms of assembly, homodimer. The cofactor is Mg(2+).

The enzyme catalyses XTP + H2O = XMP + diphosphate + H(+). It carries out the reaction dITP + H2O = dIMP + diphosphate + H(+). It catalyses the reaction ITP + H2O = IMP + diphosphate + H(+). Pyrophosphatase that catalyzes the hydrolysis of nucleoside triphosphates to their monophosphate derivatives, with a high preference for the non-canonical purine nucleotides XTP (xanthosine triphosphate), dITP (deoxyinosine triphosphate) and ITP. Seems to function as a house-cleaning enzyme that removes non-canonical purine nucleotides from the nucleotide pool, thus preventing their incorporation into DNA/RNA and avoiding chromosomal lesions. This chain is dITP/XTP pyrophosphatase, found in Pseudomonas syringae pv. tomato (strain ATCC BAA-871 / DC3000).